We begin with the raw amino-acid sequence, 324 residues long: Putative exosome complex exonuclease RRP42 (324 aa).

It belongs to the RNase PH family. In terms of assembly, component of the RNA exosome complex.

It localises to the nucleus. The protein resides in the nucleolus. Its subcellular location is the cytoplasm. In terms of biological role, non-catalytic component of the RNA exosome complex which has 3'-&gt;5' exoribonuclease activity and participates in a multitude of cellular RNA processing and degradation events. In Dictyostelium discoideum (Social amoeba), this protein is Putative exosome complex exonuclease RRP42 (exosc7).